Reading from the N-terminus, the 346-residue chain is Annexin A1 (346 aa).

Alanine 2 is subject to N-acetylalanine. A Phosphoserine; by TRPM7 modification is found at serine 5. Glutamine 19 is covalently cross-linked (Isoglutamyl lysine isopeptide (Gln-Lys) (interchain with K-?)). Residue tyrosine 21 is modified to Phosphotyrosine; by EGFR. The residue at position 27 (serine 27) is a Phosphoserine; by PKC. Residues serine 34 and serine 37 each carry the phosphoserine modification. Threonine 41 carries the post-translational modification Phosphothreonine. Annexin repeat units lie at residues 42–113 (FNPS…ALLK), 114–185 (TPAQ…SLAK), 197–269 (DLAD…AIVK), and 273–344 (SKPA…ALCG). Position 58 is an N6-acetyllysine (lysine 58). 11 residues coordinate Ca(2+): glycine 59, valine 60, glutamate 62, lysine 97, leucine 100, glutamate 105, methionine 127, glycine 129, glycine 131, threonine 132, and glutamate 134. Threonine 136 is subject to Phosphothreonine. Positions 171, 210, and 213 each coordinate Ca(2+). Lysine 214 participates in a covalent cross-link: Glycyl lysine isopeptide (Lys-Gly) (interchain with G-Cter in SUMO1); alternate. Lysine 214 participates in a covalent cross-link: Glycyl lysine isopeptide (Lys-Gly) (interchain with G-Cter in SUMO2); alternate. Glycine 215 contributes to the Ca(2+) binding site. The residue at position 239 (lysine 239) is an N6-acetyllysine. Residues aspartate 253, glutamate 255, and leucine 256 each contribute to the Ca(2+) site. A Glycyl lysine isopeptide (Lys-Gly) (interchain with G-Cter in SUMO1) cross-link involves residue lysine 257. Ca(2+) is bound by residues glutamate 261, methionine 286, glycine 288, and glycine 290. Lysine 312 bears the N6-acetyllysine mark. An intrachain disulfide couples cysteine 324 to cysteine 343. Ca(2+) is bound by residues leucine 328, glutamate 330, and threonine 331. Lysine 332 participates in a covalent cross-link: Glycyl lysine isopeptide (Lys-Gly) (interchain with G-Cter in SUMO1). Glutamate 336 lines the Ca(2+) pocket.

It belongs to the annexin family. In terms of assembly, homodimer; non-covalently linked. Homodimer; linked by transglutamylation. Homodimers linked by transglutamylation are observed in placenta, but not in other tissues. Interacts with S100A11. Heterotetramer, formed by two molecules each of S100A11 and ANXA1. Interacts with DYSF. Interacts with EGFR. Phosphorylated by protein kinase C, EGFR and TRPM7. Phosphorylated in response to EGF treatment. In terms of processing, sumoylated. Post-translationally, proteolytically cleaved by cathepsin CTSG to release the active N-terminal peptide Ac2-26. In terms of tissue distribution, detected in resting neutrophils. Detected in peripheral blood T-cells. Detected in extracellular vesicles in blood serum from patients with inflammatory bowel disease, but not in serum from healthy donors. Detected in placenta (at protein level). Detected in liver.

The protein localises to the nucleus. The protein resides in the cytoplasm. It is found in the cell projection. It localises to the cilium. Its subcellular location is the cell membrane. The protein localises to the membrane. The protein resides in the endosome membrane. It is found in the basolateral cell membrane. It localises to the apical cell membrane. Its subcellular location is the lateral cell membrane. The protein localises to the secreted. The protein resides in the extracellular space. It is found in the extracellular exosome. It localises to the cytoplasmic vesicle. Its subcellular location is the secretory vesicle lumen. The protein localises to the phagocytic cup. The protein resides in the early endosome. It is found in the cytoplasmic vesicle membrane. Functionally, plays important roles in the innate immune response as effector of glucocorticoid-mediated responses and regulator of the inflammatory process. Has anti-inflammatory activity. Plays a role in glucocorticoid-mediated down-regulation of the early phase of the inflammatory response. Contributes to the adaptive immune response by enhancing signaling cascades that are triggered by T-cell activation, regulates differentiation and proliferation of activated T-cells. Promotes the differentiation of T-cells into Th1 cells and negatively regulates differentiation into Th2 cells. Has no effect on unstimulated T cells. Negatively regulates hormone exocytosis via activation of the formyl peptide receptors and reorganization of the actin cytoskeleton. Has high affinity for Ca(2+) and can bind up to eight Ca(2+) ions. Displays Ca(2+)-dependent binding to phospholipid membranes. Plays a role in the formation of phagocytic cups and phagosomes. Plays a role in phagocytosis by mediating the Ca(2+)-dependent interaction between phagosomes and the actin cytoskeleton. Functions at least in part by activating the formyl peptide receptors and downstream signaling cascades. Promotes chemotaxis of granulocytes and monocytes via activation of the formyl peptide receptors. Promotes rearrangement of the actin cytoskeleton, cell polarization and cell migration. Promotes resolution of inflammation and wound healing. Acts via neutrophil N-formyl peptide receptors to enhance the release of CXCL2. The chain is Annexin A1 (ANXA1) from Homo sapiens (Human).